A 212-amino-acid polypeptide reads, in one-letter code: Ribonuclease HII (212 aa).

Residues 1 to 206 (MARFGVDEAG…SRDALGAAEQ (206 aa)) form the RNase H type-2 domain. D7, E8, and D100 together coordinate a divalent metal cation.

Belongs to the RNase HII family. Mn(2+) is required as a cofactor. It depends on Mg(2+) as a cofactor.

It localises to the cytoplasm. It catalyses the reaction Endonucleolytic cleavage to 5'-phosphomonoester.. Its function is as follows. Endonuclease that specifically degrades the RNA of RNA-DNA hybrids. This Halobacterium salinarum (strain ATCC 29341 / DSM 671 / R1) protein is Ribonuclease HII.